Consider the following 257-residue polypeptide: Transcription factor LBX2 (257 aa).

The interval 1–43 (MTSSSKDMKAGSVLQSSGEERRRGPLDQLPPPANSNKPLTPFS) is disordered. The segment at 1–46 (MTSSSKDMKAGSVLQSSGEERRRGPLDQLPPPANSNKPLTPFSIED) is required for convergent extension movement and hypaxial myogenesis during gastrulation. Required for the formation of thick and thin myofilaments. Required for myod1 expression in the pectoral fin bud. Required for continuous expression of cxcl12a in the posterior lateral mesoderm at the tail bud stage and in adaxial cells at the 10-somite stage. The homeobox DNA-binding region spans 126-185 (RRKSRTAFTNHQIYELEKRFLYQKYLSPADRDQIAQQLGLTNAQVITWFQNRRAKLKRDL). Positions 206–257 (LVSMEDMEDAHGGSGPISPSLSPRAFPQSPSSSRGQTTDEFSEEDEEIEVDD) are disordered. Residues 233-243 (QSPSSSRGQTT) show a composition bias toward polar residues. Residues 245–257 (EFSEEDEEIEVDD) are compositionally biased toward acidic residues.

As to quaternary structure, interacts (via N-terminus) with tle3a/gro2 (via C-terminus).

The protein resides in the nucleus. Functionally, transcription factor required in several developmental processes. Involved in axis formation during embryonic development by inhibiting tle3a/gro2 from binding to tcf7l1a, thereby facilitating ctnnb1-mediated transcription of canonical Wnt/CTNNB1 signaling target genes. Regulates convergent extension movements and hypaxial myogenesis during gastrulation by activating non-canonical Wnt signaling via wnt5b. Required for the formation of myofibrils and fusion of fast muscle precursor cells, potentially via transcriptional regulation of genes specific to thick and thin myofilaments. Regulates the migration of the posterior lateral line primordium during embryonic development, possibly via regulation of cxcl12a/sdf1a expression in the posterior lateral mesoderm, thereby modulating the deposition of neuromasts at correct intervals. This is Transcription factor LBX2 from Danio rerio (Zebrafish).